Consider the following 114-residue polypeptide: MVAALHAGKAVTIAPQSMTLTTQQAADLLGVSRPTVVRLIKSGELAAERIGNRHRLVLDDVLAYREARRQRQYDALAESAMDIDADEDPEVICEQLREARRVVAARRRTERRRA.

This is an uncharacterized protein from Mycobacterium bovis (strain ATCC BAA-935 / AF2122/97).